Reading from the N-terminus, the 162-residue chain is NADH-quinone oxidoreductase subunit I (162 aa).

2 consecutive 4Fe-4S ferredoxin-type domains span residues 54-83 (RRYE…INST) and 93-122 (SSYE…ETNI). [4Fe-4S] cluster-binding residues include C63, C66, C69, C73, C102, C105, C108, and C112.

It belongs to the complex I 23 kDa subunit family. NDH-1 is composed of 14 different subunits. Subunits NuoA, H, J, K, L, M, N constitute the membrane sector of the complex. Requires [4Fe-4S] cluster as cofactor.

The protein localises to the cell inner membrane. The enzyme catalyses a quinone + NADH + 5 H(+)(in) = a quinol + NAD(+) + 4 H(+)(out). In terms of biological role, NDH-1 shuttles electrons from NADH, via FMN and iron-sulfur (Fe-S) centers, to quinones in the respiratory chain. The immediate electron acceptor for the enzyme in this species is believed to be ubiquinone. Couples the redox reaction to proton translocation (for every two electrons transferred, four hydrogen ions are translocated across the cytoplasmic membrane), and thus conserves the redox energy in a proton gradient. The polypeptide is NADH-quinone oxidoreductase subunit I (Francisella tularensis subsp. tularensis (strain FSC 198)).